Consider the following 473-residue polypeptide: Probable ribonuclease FAU-1 (473 aa).

It belongs to the FAU-1 family.

Functionally, probable RNase involved in rRNA stability through maturation and/or degradation of precursor rRNAs. Binds to RNA in loop regions with AU-rich sequences. This Hyperthermus butylicus (strain DSM 5456 / JCM 9403 / PLM1-5) protein is Probable ribonuclease FAU-1.